The sequence spans 107 residues: N(4)-acetylcytidine amidohydrolase (107 aa).

Residues 6–102 form the ASCH domain; the sequence is TFYRRFQADI…RLYVISFSLV (97 aa). Residue K20 is the Proton acceptor of the active site. T23 acts as the Nucleophile in catalysis. E73 functions as the Proton donor in the catalytic mechanism.

It belongs to the N(4)-acetylcytidine amidohydrolase family.

The enzyme catalyses N(4)-acetylcytidine + H2O = cytidine + acetate + H(+). It carries out the reaction N(4)-acetyl-2'-deoxycytidine + H2O = 2'-deoxycytidine + acetate + H(+). The catalysed reaction is N(4)-acetylcytosine + H2O = cytosine + acetate + H(+). Catalyzes the hydrolysis of N(4)-acetylcytidine (ac4C). In Edwardsiella ictaluri (strain 93-146), this protein is N(4)-acetylcytidine amidohydrolase.